We begin with the raw amino-acid sequence, 93 residues long: UPF0473 protein BH1270 (93 aa).

It belongs to the UPF0473 family.

This chain is UPF0473 protein BH1270, found in Halalkalibacterium halodurans (strain ATCC BAA-125 / DSM 18197 / FERM 7344 / JCM 9153 / C-125) (Bacillus halodurans).